Here is a 665-residue protein sequence, read N- to C-terminus: Probable arginine--tRNA ligase, cytoplasmic (665 aa).

L-arginine contacts are provided by residues 204-206 (SPN), His-215, Tyr-390, Asp-394, and Gln-418. Residues 205–216 (PNIAKQMHVGHL) carry the 'HIGH' region motif. Residues 535 to 549 (NTAVYLLYTYTRICS) are interaction with tRNA.

This sequence belongs to the class-I aminoacyl-tRNA synthetase family.

The protein localises to the cytoplasm. The protein resides in the cytosol. It catalyses the reaction tRNA(Arg) + L-arginine + ATP = L-arginyl-tRNA(Arg) + AMP + diphosphate. Forms part of a macromolecular complex that catalyzes the attachment of specific amino acids to cognate tRNAs during protein synthesis. This Drosophila melanogaster (Fruit fly) protein is Probable arginine--tRNA ligase, cytoplasmic.